The primary structure comprises 281 residues: uncharacterized protein (281 aa).

3 helical membrane passes run 23-45 (LLLSYIINLISSIIILIIGFFAA), 65-87 (IANFLAALVRYIIITFALIASLG), and 94-116 (TSVIAILGAAGMAIGLALQGSLS).

This sequence belongs to the MscS (TC 1.A.23) family.

The protein localises to the cell membrane. This is an uncharacterized protein from Buchnera aphidicola subsp. Baizongia pistaciae (strain Bp).